Consider the following 243-residue polypeptide: MAKVEQVLSLEPQHELKFRGPFTDVVTTNLKLGNPTDRNVCFKVKTTAPRRYCVRPNSGIIDAGASINVSVMLQPFDYDPNEKSKHKFMVQSMFAPTDTSDMEAVWKEAKPEDLMDSKLRCVFELPAENDKPHDVEINKIISTTASKTETPIVSKSLSSSLDDTEVKKVMEECKRLQGEVQRLREENKQFKEEDGLRMRKTVQSNSPISALAPTGKEEGLSTRLLALVVLFFIVGVIIGKIAL.

N-acetylalanine is present on A2. At 2 to 222 (AKVEQVLSLE…PTGKEEGLST (221 aa)) the chain is on the cytoplasmic side. Residues 7–124 (VLSLEPQHEL…MDSKLRCVFE (118 aa)) form the MSP domain. S146 is subject to Phosphoserine. Residue K147 forms a Glycyl lysine isopeptide (Lys-Gly) (interchain with G-Cter in SUMO1) linkage. Position 150 is a phosphothreonine (T150). A phosphoserine mark is found at S156, S158, S159, S160, and S206. A coiled-coil region spans residues 159-196 (SSLDDTEVKKVMEECKRLQGEVQRLREENKQFKEEDGL). The chain crosses the membrane as a helical; Anchor for type IV membrane protein span at residues 223–243 (RLLALVVLFFIVGVIIGKIAL).

Belongs to the VAMP-associated protein (VAP) (TC 9.B.17) family. In terms of assembly, homodimer, and heterodimer with VAPA. Interacts with VAMP1 and VAMP2. Interacts (via MSP domain) with ZFYVE27. Interacts with RMDN3. Interacts with KIF5A in a ZFYVE27-dependent manner. Interacts (via MSP domain) with STARD3 (via phospho-FFAT motif). Interacts with STARD3NL (via FFAT motif). Interacts with CERT1. Interacts with PLEKHA3 and SACM1L to form a ternary complex. Interacts with VPS13A (via FFAT motif). Interacts with RB1CC1 (via phosphorylated FFAT motif), MIGA2 (via phosphorylated FFAT motif), RMDN3 (via phosphorylated FFAT motif), OSBPL1A (via FFAT motif), KCNB1 (via phosphorylated FFAT motif) and KCNB2 (via phosphorylated FFAT motif). Interacts (via MSP domain) with WDR44 (via FFAT motif); the interactions connect the endoplasmic reticulum (ER) with the endosomal tubule. (Microbial infection) Interacts (via MSP domain) with hepatitis C virus (HCV) non-structural protein 5A (via disordered domain D3). Interacts with HCV RNA-directed RNA polymerase. As to expression, ubiquitous. Isoform 1 predominates.

Its subcellular location is the endoplasmic reticulum membrane. Endoplasmic reticulum (ER)-anchored protein that mediates the formation of contact sites between the ER and endosomes via interaction with FFAT motif-containing proteins such as STARD3 or WDR44. Interacts with STARD3 in a FFAT motif phosphorylation dependent manner. Via interaction with WDR44 participates in neosynthesized protein export. Participates in the endoplasmic reticulum unfolded protein response (UPR) by inducing ERN1/IRE1 activity. Involved in cellular calcium homeostasis regulation. The protein is Vesicle-associated membrane protein-associated protein B/C of Homo sapiens (Human).